A 630-amino-acid polypeptide reads, in one-letter code: Probable potassium transport system protein Kup (630 aa).

The next 12 helical transmembrane spans lie at 17–37 (LAIA…LYSL), 51–71 (PSAI…VVGI), 105–125 (ITGL…GDAV), 144–164 (PQLS…LFWI), 175–195 (LFGP…IYHI), 218–238 (VLLA…AEAL), 255–275 (YVLV…LLLL), 283–303 (PFFL…STVA), 344–364 (IYVP…VIGF), 374–394 (YGIA…VVMV), 402–422 (LLVA…FGAN), and 428–448 (QGGW…MTWY).

This sequence belongs to the HAK/KUP transporter (TC 2.A.72) family.

It localises to the cell inner membrane. The catalysed reaction is K(+)(in) + H(+)(in) = K(+)(out) + H(+)(out). Transport of potassium into the cell. Likely operates as a K(+):H(+) symporter. The polypeptide is Probable potassium transport system protein Kup (Burkholderia mallei (strain NCTC 10247)).